The following is a 225-amino-acid chain: Large ribosomal subunit protein mL58 (225 aa).

The disordered stretch occupies residues 106-138; it reads PQAPITTPESSSTDAAAADQHGDLPPVLYNPTK. Positions 109–119 are enriched in polar residues; that stretch reads PITTPESSSTD.

The protein belongs to the mitochondrion-specific ribosomal protein mL58 family. Component of the mitochondrial large ribosomal subunit (mt-LSU). Mature N.crassa 74S mitochondrial ribosomes consist of a small (37S) and a large (54S) subunit. The 37S small subunit contains a 16S ribosomal RNA (16S mt-rRNA) and 32 different proteins. The 54S large subunit contains a 23S rRNA (23S mt-rRNA) and 42 different proteins.

The protein resides in the mitochondrion. Its function is as follows. Component of the mitochondrial ribosome (mitoribosome), a dedicated translation machinery responsible for the synthesis of mitochondrial genome-encoded proteins, including at least some of the essential transmembrane subunits of the mitochondrial respiratory chain. The mitoribosomes are attached to the mitochondrial inner membrane and translation products are cotranslationally integrated into the membrane. The chain is Large ribosomal subunit protein mL58 (mrpl20) from Neurospora crassa (strain ATCC 24698 / 74-OR23-1A / CBS 708.71 / DSM 1257 / FGSC 987).